A 378-amino-acid polypeptide reads, in one-letter code: Erythronate-4-phosphate dehydrogenase (378 aa).

Substrate contacts are provided by serine 45 and threonine 66. Residues aspartate 146 and threonine 175 each contribute to the NAD(+) site. Arginine 208 is an active-site residue. Aspartate 232 is a binding site for NAD(+). Residue glutamate 237 is part of the active site. The Proton donor role is filled by histidine 254. Position 257 (glycine 257) interacts with NAD(+). Tyrosine 258 lines the substrate pocket.

It belongs to the D-isomer specific 2-hydroxyacid dehydrogenase family. PdxB subfamily. As to quaternary structure, homodimer.

It localises to the cytoplasm. The catalysed reaction is 4-phospho-D-erythronate + NAD(+) = (R)-3-hydroxy-2-oxo-4-phosphooxybutanoate + NADH + H(+). Its pathway is cofactor biosynthesis; pyridoxine 5'-phosphate biosynthesis; pyridoxine 5'-phosphate from D-erythrose 4-phosphate: step 2/5. Catalyzes the oxidation of erythronate-4-phosphate to 3-hydroxy-2-oxo-4-phosphonooxybutanoate. The sequence is that of Erythronate-4-phosphate dehydrogenase from Pectobacterium atrosepticum (strain SCRI 1043 / ATCC BAA-672) (Erwinia carotovora subsp. atroseptica).